Reading from the N-terminus, the 51-residue chain is Kunitz-like toxin PcKuz3 (51 aa).

3 cysteine pairs are disulfide-bonded: Cys-1-Cys-51, Cys-10-Cys-34, and Cys-26-Cys-47.

This sequence belongs to the venom Kunitz-type family. Sea anemone type 2 potassium channel toxin subfamily.

It localises to the secreted. It is found in the nematocyst. Its function is as follows. Potent toxin and weak serine protease inhibitor that displays activity on both trypsin and elastase. May act as a neurotoxin by blocking voltage-gated potassium channels (Kv1.1/KCNA1 and Kv1.2/KCNA2). Has a neuroprotective effect, since it suppress, at low concentration, the 6-hydroxydopamine-induced neurotoxicity on the locomotive behavior of zebrafish. In vivo, has strong reversible antilocomotor activity. In addition, it is lethal to zebrafish larvae at high doses. This Palythoa caribaeorum (White encrusting zoanthid coral) protein is Kunitz-like toxin PcKuz3.